Here is a 379-residue protein sequence, read N- to C-terminus: Putative clathrin assembly protein At1g68110 (379 aa).

The 133-residue stretch at 26–158 folds into the ENTH domain; it reads NSSYRNADLE…SFLSDQIHRL (133 aa).

The protein localises to the membrane. It localises to the clathrin-coated pit. The protein resides in the golgi apparatus. Its subcellular location is the cytoplasmic vesicle. It is found in the clathrin-coated vesicle. The chain is Putative clathrin assembly protein At1g68110 from Arabidopsis thaliana (Mouse-ear cress).